A 563-amino-acid polypeptide reads, in one-letter code: BOS complex subunit NCLN (563 aa).

The N-terminal stretch at 1–42 is a signal peptide; that stretch reads MLEEAGEVLENVLKASCLPLGFIVFLPAVLLLVAPPLPAADA. The Lumenal portion of the chain corresponds to 43-522; sequence AHEFTVYRMQ…VMNAYRVKPA (480 aa). N-linked (GlcNAc...) asparagine glycans are attached at residues Asn-241 and Asn-428. The helical transmembrane segment at 523 to 543 threads the bilayer; the sequence is IFDLLLALCIGAYLGMAYTAV. Residues 544 to 563 lie on the Cytoplasmic side of the membrane; sequence QHFHVLYKTVQRLLLKAKAQ.

This sequence belongs to the nicastrin family. Component of the back of Sec61 (BOS) complex, composed of NCLN/Nicalin, NOMO1 and TMEM147. The BOS complex is part of the multi-pass translocon (MPT) complex, composed of three subcomplexes, the GEL complex (composed of RAB5IF/OPTI and TMCO1), the BOS complex (composed of NCLN/Nicalin, NOMO1 and TMEM147) and the PAT complex (composed of WDR83OS/Asterix and CCDC47). The MPT complex associates with the SEC61 complex.

It is found in the endoplasmic reticulum membrane. Its function is as follows. Component of the multi-pass translocon (MPT) complex that mediates insertion of multi-pass membrane proteins into the lipid bilayer of membranes. The MPT complex takes over after the SEC61 complex: following membrane insertion of the first few transmembrane segments of proteins by the SEC61 complex, the MPT complex occludes the lateral gate of the SEC61 complex to promote insertion of subsequent transmembrane regions. May antagonize Nodal signaling and subsequent organization of axial structures during mesodermal patterning, via its interaction with NOMO. The polypeptide is BOS complex subunit NCLN (Ncln) (Rattus norvegicus (Rat)).